The following is a 188-amino-acid chain: F-box only protein 36 (188 aa).

An F-box domain is found at 91 to 137 (FDFLERLSDDLLLTIISYLDLEDIARLCQTSHRFAKLCMSDKLWEQI).

Directly interacts with SKP1 and CUL1.

Functionally, substrate-recognition component of the SCF (SKP1-CUL1-F-box protein)-type E3 ubiquitin ligase complex. This chain is F-box only protein 36 (FBXO36), found in Homo sapiens (Human).